The primary structure comprises 504 residues: 5-epiaristolochene 1,3-dihydroxylase (504 aa).

A helical membrane pass occupies residues Q2–W22. Residue C442 coordinates heme.

Belongs to the cytochrome P450 family. Heme serves as cofactor.

The protein localises to the membrane. It carries out the reaction (+)-5-epi-aristolochene + 2 reduced [NADPH--hemoprotein reductase] + 2 O2 = capsidiol + 2 oxidized [NADPH--hemoprotein reductase] + 2 H2O + 2 H(+). With respect to regulation, inhibited by ancymidol and ketoconazole. In terms of biological role, involved in the biosynthesis of capsidiol. Catalyzes the successive and independent hydroxylations at the C1 and C3 positions of 5-epiaristolochene. The second hydroxylation step is 8-fold more efficient than the first hydroxylation reaction. Capable of utilizing premnaspirodiene as a substrate. The protein is 5-epiaristolochene 1,3-dihydroxylase (CYP71D20) of Nicotiana tabacum (Common tobacco).